We begin with the raw amino-acid sequence, 1413 residues long: DNA-directed RNA polymerase subunit beta' (1413 aa).

The Zn(2+) site is built by Cys-70, Cys-72, Cys-85, and Cys-88. Mg(2+) contacts are provided by Asp-460, Asp-462, and Asp-464. Positions 819, 893, 900, and 903 each coordinate Zn(2+).

The protein belongs to the RNA polymerase beta' chain family. As to quaternary structure, the RNAP catalytic core consists of 2 alpha, 1 beta, 1 beta' and 1 omega subunit. When a sigma factor is associated with the core the holoenzyme is formed, which can initiate transcription. Mg(2+) is required as a cofactor. Zn(2+) serves as cofactor.

The enzyme catalyses RNA(n) + a ribonucleoside 5'-triphosphate = RNA(n+1) + diphosphate. Its function is as follows. DNA-dependent RNA polymerase catalyzes the transcription of DNA into RNA using the four ribonucleoside triphosphates as substrates. The chain is DNA-directed RNA polymerase subunit beta' from Burkholderia multivorans (strain ATCC 17616 / 249).